Here is a 111-residue protein sequence, read N- to C-terminus: Protein E7 (111 aa).

Residues 1–44 (MHGERPTLGDIVLDLQPEPVSLSCNEQLDSSDSEDDHEQDQLDS) are E7 terminal domain. An LXCXE motif; interaction with host RB1 and TMEM173/STING motif is present at residues 22–26 (LSCNE). Positions 24–55 (CNEQLDSSDSEDDHEQDQLDSSHNRQREQPTQ) are disordered. Residues 29–38 (DSSDSEDDHE) are compositionally biased toward acidic residues. The segment covering 39 to 51 (QDQLDSSHNRQRE) has biased composition (basic and acidic residues). A zinc finger spans residues 71 to 107 (CVFCHCLVRLVVHCTATDIRQVHQLLMGTLNIVCPNC). The Nuclear export signal signature appears at 89–97 (IRQVHQLLM).

It belongs to the papillomaviridae E7 protein family. In terms of assembly, homodimer. Homooligomer. Interacts with host RB1; this interaction induces dissociation of RB1-E2F1 complex thereby disrupting RB1 activity. Interacts with host EP300; this interaction represses EP300 transcriptional activity. Interacts with protein E2; this interaction inhibits E7 oncogenic activity. Interacts with host TMEM173/STING; this interaction impairs the ability of TMEM173/STING to sense cytosolic DNA and promote the production of type I interferon (IFN-alpha and IFN-beta). In terms of processing, highly phosphorylated.

It is found in the host cytoplasm. It localises to the host nucleus. Functionally, plays a role in viral genome replication by driving entry of quiescent cells into the cell cycle. Stimulation of progression from G1 to S phase allows the virus to efficiently use the cellular DNA replicating machinery to achieve viral genome replication. E7 protein has both transforming and trans-activating activities. Induces the disassembly of the E2F1 transcription factor from RB1, with subsequent transcriptional activation of E2F1-regulated S-phase genes. Interferes with host histone deacetylation mediated by HDAC1 and HDAC2, leading to transcription activation. Also plays a role in the inhibition of both antiviral and antiproliferative functions of host interferon alpha. Interaction with host TMEM173/STING impairs the ability of TMEM173/STING to sense cytosolic DNA and promote the production of type I interferon (IFN-alpha and IFN-beta). The chain is Protein E7 from Human papillomavirus 7.